The following is a 394-amino-acid chain: Actin-related protein 2 (394 aa).

M1 is subject to N-acetylmethionine. ATP-binding positions include 160 to 162 and 214 to 218; these read GDG and RMIKE. K299 is subject to N6-acetyllysine. Residue 305-310 coordinates ATP; it reads GGSTMY. K322 carries the N6-acetyllysine modification.

It belongs to the actin family. ARP2 subfamily. Component of the Arp2/3 complex composed of ACTR2/ARP2, ACTR3/ARP3, ARPC1B/p41-ARC, ARPC2/p34-ARC, ARPC3/p21-ARC, ARPC4/p20-ARC and ARPC5/p16-ARC. Interacts with AVIL.

Its subcellular location is the cytoplasm. The protein resides in the cytoskeleton. It localises to the cell projection. The protein localises to the nucleus. Its function is as follows. ATP-binding component of the Arp2/3 complex, a multiprotein complex that mediates actin polymerization upon stimulation by nucleation-promoting factor (NPF). The Arp2/3 complex mediates the formation of branched actin networks in the cytoplasm, providing the force for cell motility. Seems to contact the pointed end of the daughter actin filament. In podocytes, required for the formation of lamellipodia downstream of AVIL and PLCE1 regulation. In addition to its role in the cytoplasmic cytoskeleton, the Arp2/3 complex also promotes actin polymerization in the nucleus, thereby regulating gene transcription and repair of damaged DNA. The Arp2/3 complex promotes homologous recombination (HR) repair in response to DNA damage by promoting nuclear actin polymerization, leading to drive motility of double-strand breaks (DSBs). This chain is Actin-related protein 2 (ACTR2), found in Pongo abelii (Sumatran orangutan).